A 575-amino-acid chain; its full sequence is Electron transfer flavoprotein-ubiquinone oxidoreductase, mitochondrial (575 aa).

The transit peptide at 1-33 (MQRVLRAAAAGIGHASGHRAPRWGAAAAAARWL) directs the protein to the mitochondrion. Position 44–58 (44–58 (VVVVGAGPAGLAAAI)) interacts with FAD. Residues 82–103 (VGAHVLSGNVFEPRALDELIPK) lie within the membrane without spanning it. A ubiquinone is bound by residues Gly-276 and Gly-277. The stretch at 343–363 (IPNPVFPGGAIIGCSAGFLNV) is an intramembrane region. Residues Cys-520, Cys-544, Cys-547, and Cys-550 each coordinate [4Fe-4S] cluster. Residues 535-564 (QKLHINAQNCLHCKACDIKDPKQNIEWTVP) form the 4Fe-4S ferredoxin-type domain.

This sequence belongs to the ETF-QO/FixC family. Requires [4Fe-4S] cluster as cofactor. FAD is required as a cofactor.

The protein localises to the mitochondrion inner membrane. The catalysed reaction is a ubiquinone + reduced [electron-transfer flavoprotein] = a ubiquinol + oxidized [electron-transfer flavoprotein] + H(+). In terms of biological role, accepts electrons from ETF and reduces ubiquinone. The sequence is that of Electron transfer flavoprotein-ubiquinone oxidoreductase, mitochondrial from Oryza sativa subsp. japonica (Rice).